A 501-amino-acid polypeptide reads, in one-letter code: Isoflavone 3'-hydroxylase (501 aa).

The helical transmembrane segment at 7–24 threads the bilayer; sequence LLSLSFIITIKILLKITS. Position 439 (cysteine 439) interacts with heme.

This sequence belongs to the cytochrome P450 family. The cofactor is heme. As to expression, expressed constitutively in leaves and stems, but not in roots.

Its subcellular location is the endoplasmic reticulum membrane. The enzyme catalyses formononetin + reduced [NADPH--hemoprotein reductase] + O2 = calycosin + oxidized [NADPH--hemoprotein reductase] + H2O + H(+). Involved in the biosynthesis of the pterocarpin phytoalexins. Acts on isoflavones with a 4'-methoxy group on the B-ring, such as biochanin A, formononetin and 2'-hydroxyformononetin. Has a low activity with daidzein and pseudobaptigenin, and no activity with the 7-O-methylated isoflavonoids isoformononetin and prunetin. The chain is Isoflavone 3'-hydroxylase from Medicago truncatula (Barrel medic).